Here is a 940-residue protein sequence, read N- to C-terminus: Translation initiation factor IF-2 (940 aa).

Low complexity-rich tracts occupy residues 138 to 147 (APVEVVAEPE) and 161 to 208 (PVVV…ITEL). Positions 138–354 (APVEVVAEPE…DRQTFQAPTE (217 aa)) are disordered. Composition is skewed to basic and acidic residues over residues 214–271 (IAAR…EEAA) and 289–311 (AKADDKAGKDAKRGPAREADGAK). The region spanning 440-609 (PRAPVVTVMG…LLQAEVLELT (170 aa)) is the tr-type G domain. The tract at residues 449-456 (GHVDHGKT) is G1. GTP is bound at residue 449-456 (GHVDHGKT). Positions 474–478 (GITQH) are G2. A G3 region spans residues 495–498 (DTPG). Residues 495-499 (DTPGH) and 549-552 (TKID) contribute to the GTP site. The tract at residues 549-552 (TKID) is G4. Residues 585 to 587 (SAK) form a G5 region.

This sequence belongs to the TRAFAC class translation factor GTPase superfamily. Classic translation factor GTPase family. IF-2 subfamily.

It localises to the cytoplasm. One of the essential components for the initiation of protein synthesis. Protects formylmethionyl-tRNA from spontaneous hydrolysis and promotes its binding to the 30S ribosomal subunits. Also involved in the hydrolysis of GTP during the formation of the 70S ribosomal complex. In Azoarcus sp. (strain BH72), this protein is Translation initiation factor IF-2.